The chain runs to 269 residues: Aquaporin-1 (269 aa).

The Cytoplasmic portion of the chain corresponds to 1–11 (MASEFKKKLFW). A helical transmembrane segment spans residues 12–29 (RAVVAEFLAMTLFVFISI). The Extracellular portion of the chain corresponds to 30–46 (GSALGFKYPVGNNQTAV). Residue asparagine 42 is glycosylated (N-linked (GlcNAc...) asparagine). A helical membrane pass occupies residues 47–65 (QDNVKVSLAFGLSIATLAQ). The Cytoplasmic segment spans residues 66 to 68 (SVG). The stretch at 69-82 (HISGAHLNPAVTLG) is an intramembrane region. Positions 76-78 (NPA) match the NPA 1 motif. Residues 83–90 (LLLSCQIS) are Cytoplasmic-facing. Residues 91-109 (IFRALMYIIAQCVGAIVAT) traverse the membrane as a helical segment. Residues 110-133 (AILSGITSSLPGNSLGRNDLADGV) lie on the Extracellular side of the membrane. Residues 134-153 (NSGQGLGIEIIGTLQLVLCV) form a helical membrane-spanning segment. The Cytoplasmic segment spans residues 154–163 (LATTDRRRRD). The chain crosses the membrane as a helical span at residues 164 to 181 (LGGSAPLAIGLSVALGHL). Topologically, residues 182–186 (LAIDY) are extracellular. Residues 187-199 (TGCGINPARSFGS) lie within the membrane without spanning it. The short motif at 192 to 194 (NPA) is the NPA 2 element. The Extracellular segment spans residues 200-206 (AVITHNF). The N-linked (GlcNAc...) asparagine glycan is linked to asparagine 205. A helical membrane pass occupies residues 207–224 (SNHWIFWVGPFIGGALAV). Residues 225 to 269 (LIYDFILAPRSSDFTDRVKVWTSGQVEEYDLDADDINSRVEMKPK) lie on the Cytoplasmic side of the membrane. Residue serine 247 is modified to Phosphoserine. Tyrosine 253 is subject to Phosphotyrosine. The residue at position 262 (serine 262) is a Phosphoserine.

The protein belongs to the MIP/aquaporin (TC 1.A.8) family. In terms of assembly, homotetramer; each monomer provides an independent water pore. Component of the ankyrin-1 complex in the erythrocyte, composed of ANK1, RHCE, RHAG, SLC4A1, EPB42, GYPA, GYPB and AQP1. Interacts with EPHB2; involved in endolymph production in the inner ear. Identified in a complex with STOM. Interacts (via the N-terminal) with ANK1 (via ANK 1-5 repeats). Interacts (via the C-terminal) with EPB42.

Its subcellular location is the cell membrane. The enzyme catalyses H2O(in) = H2O(out). The catalysed reaction is nitric oxide(out) = nitric oxide(in). It carries out the reaction CO2(out) = CO2(in). It catalyses the reaction glycerol(in) = glycerol(out). The enzyme catalyses H2O2(out) = H2O2(in). The catalysed reaction is K(+)(in) = K(+)(out). It carries out the reaction Na(+)(in) = Na(+)(out). Forms a water channel that facilitates the transport of water across cell membranes, playing a crucial role in water homeostasis in various tissues. Could also be permeable to small solutes including hydrogen peroxide, glycerol and gases such as amonnia (NH3), nitric oxide (NO) and carbon dioxide (CO2). Recruited to the ankyrin-1 complex, a multiprotein complex of the erythrocyte membrane, it could be part of a CO2 metabolon, linking facilitated diffusion of CO2 across the membrane, anion exchange of Cl(-)/HCO3(-) and interconversion of dissolved CO2 and carbonic acid in the cytosol. In vitro, it shows non-selective gated cation channel activity and may be permeable to cations like K(+) and Na(+) in vivo. This is Aquaporin-1 from Pongo abelii (Sumatran orangutan).